We begin with the raw amino-acid sequence, 568 residues long: Sulfite reductase [NADPH] hemoprotein beta-component (568 aa).

[4Fe-4S] cluster contacts are provided by Cys425, Cys431, Cys470, and Cys474. Cys474 contributes to the siroheme binding site.

The protein belongs to the nitrite and sulfite reductase 4Fe-4S domain family. Alpha(8)-beta(8). The alpha component is a flavoprotein, the beta component is a hemoprotein. Siroheme is required as a cofactor. [4Fe-4S] cluster serves as cofactor.

It carries out the reaction hydrogen sulfide + 3 NADP(+) + 3 H2O = sulfite + 3 NADPH + 4 H(+). Its pathway is sulfur metabolism; hydrogen sulfide biosynthesis; hydrogen sulfide from sulfite (NADPH route): step 1/1. Component of the sulfite reductase complex that catalyzes the 6-electron reduction of sulfite to sulfide. This is one of several activities required for the biosynthesis of L-cysteine from sulfate. The polypeptide is Sulfite reductase [NADPH] hemoprotein beta-component (Xanthomonas oryzae pv. oryzae (strain MAFF 311018)).